We begin with the raw amino-acid sequence, 619 residues long: Chaperone protein HscA homolog (619 aa).

The protein belongs to the heat shock protein 70 family.

Chaperone involved in the maturation of iron-sulfur cluster-containing proteins. Has a low intrinsic ATPase activity which is markedly stimulated by HscB. This chain is Chaperone protein HscA homolog, found in Shewanella denitrificans (strain OS217 / ATCC BAA-1090 / DSM 15013).